The sequence spans 90 residues: Small ribosomal subunit protein bS16 (90 aa).

Belongs to the bacterial ribosomal protein bS16 family.

The chain is Small ribosomal subunit protein bS16 from Lactococcus lactis subsp. cremoris (strain MG1363).